We begin with the raw amino-acid sequence, 215 residues long: Glutathione S-transferase stcT (215 aa).

A GST N-terminal domain is found at 2–82; it reads PFGTLYTRPF…YDSNTTLLGT (81 aa). Glutathione contacts are provided by K52 and E66. K52 provides a ligand contact to substrate. The GST C-terminal domain occupies 83 to 211; the sequence is TGQEYASIIR…PVLAEYEMPI (129 aa).

Belongs to the GST superfamily. Glutathione serves as cofactor.

The protein operates within mycotoxin biosynthesis; sterigmatocystin biosynthesis. In terms of biological role, glutathione S-transferase; part of the gene cluster that mediates the biosynthesis of sterigmatocystin (ST), a polyketide-derived furanocoumarin which is part of the most toxic and carcinogenic compounds among the known mycotoxins. The first step in the biosynthesis of sterigmatocystin is the production of hexanoate by the fatty acid synthase (FAS) units stcJ and stcK. The polyketide backbone is assembled by the non-reducing polyketide synthase stcA by condensation of the starter hexanoyl-CoA and 7 malonyl-CoA extender units followed by cyclization and release of norsolorinic acid. Norsolorinic acid is the first stable intermediate in the biosynthesis of sterigmatocystin and is converted into averantin (AVN) by the ketoreductase stcE which reduces the hexanoate ketone to an alcohol. Averantin is then oxidized into 5'-hydroxyaverantin (HAVN) by the cytochrome P450 monooxygenase stcF. 5'-hydroxyaverantin is further converted to 5'-oxyaverantin (OAVN) by the 5'-hydroxyaverantin dehydrogenase stcG. The next step is the conversion of OAVN into averufin (AVF) which is catalyzed by a yet to be identified enzyme. The cytochrome P450 monooxygenase stcB and the flavin-binding monooxygenase stcW are both required for the conversion of averufin to 1-hydroxyversicolorone. The esterase stcI probably catalyzes the formation of versiconal hemiacetal acetate from 1-hydroxyversicolorone. The oxydoreductase stcN then probably catalyzes the biosynthetic step from versiconal to versicolorin B (VERB). The next step is performed by the versicolorin B desaturase stcL to produce versicolorin A (VERA). The ketoreductase stcU and the cytochrome P450 monooxygenase stcS are involved in the conversion of versicolorin A to demethylsterigmatocystin. The Baeyer-Villiger oxidas stcQ and the reductase stcR might be involved in the biosynthetic step from versicolorin A to demethylsterigmatocystin. The final step in the biosynthesis of sterigmatocystin is the methylation of demethylsterigmatocystin catalyzed by the methyltransferase stcP. This chain is Glutathione S-transferase stcT, found in Emericella nidulans (strain FGSC A4 / ATCC 38163 / CBS 112.46 / NRRL 194 / M139) (Aspergillus nidulans).